Reading from the N-terminus, the 343-residue chain is Methionine import ATP-binding protein MetN 1 (343 aa).

An ABC transporter domain is found at 2-241 (IKLSNITKVF…PKTPLAQKFI (240 aa)). 38 to 45 (GASGAGKS) is a binding site for ATP.

The protein belongs to the ABC transporter superfamily. Methionine importer (TC 3.A.1.24) family. The complex is composed of two ATP-binding proteins (MetN), two transmembrane proteins (MetI) and a solute-binding protein (MetQ).

It is found in the cell inner membrane. The catalysed reaction is L-methionine(out) + ATP + H2O = L-methionine(in) + ADP + phosphate + H(+). It catalyses the reaction D-methionine(out) + ATP + H2O = D-methionine(in) + ADP + phosphate + H(+). Functionally, part of the ABC transporter complex MetNIQ involved in methionine import. Responsible for energy coupling to the transport system. The chain is Methionine import ATP-binding protein MetN 1 from Salmonella choleraesuis (strain SC-B67).